The chain runs to 669 residues: RNA-binding protein 14 (669 aa).

RRM domains lie at 1–73 (MKIF…MSRP) and 79–149 (WKIF…LSTK). Residues K126, K135, K138, K149, and K153 each participate in a glycyl lysine isopeptide (Lys-Gly) (interchain with G-Cter in SUMO2) cross-link. 2 disordered regions span residues 147–175 (STKG…DTAF) and 193–232 (NSTG…PLTA). Residue S161 is modified to Phosphoserine. Residue K164 is modified to N6-acetyllysine; alternate. Residue K164 forms a Glycyl lysine isopeptide (Lys-Gly) (interchain with G-Cter in SUMO2); alternate linkage. T206 bears the Phosphothreonine mark. Residues S220, S242, S244, S256, S272, and S280 each carry the phosphoserine modification. A disordered region spans residues 284–303 (PYRGQLASPSSQSAAASSLG). Low complexity predominate over residues 287-303 (GQLASPSSQSAAASSLG). Positions 307–354 (GAQPSASALSSYGGQAAAASSLNSYGAQGSSLASYGNQPSSYGAQAAS) are TRBP-interacting domain; interaction with STIL. 4 positions are modified to phosphoserine: S520, S523, S527, and S562. Positions 566–590 (VANANSTPPPYERTRLSPPRASYDD) are disordered. T572 is modified (phosphothreonine). S582 bears the Phosphoserine mark. K600 participates in a covalent cross-link: Glycyl lysine isopeptide (Lys-Gly) (interchain with G-Cter in SUMO2). S618, S620, S623, S627, S643, and S649 each carry phosphoserine.

As to quaternary structure, isoform 1: Interacts with NCOA6, CITED1 and XRCC5/KU86. Isoform 1: Interacts with SS18 isoform 1. Isoform 1: Interacts with SS18 isoform 2. Interacts with STIL and interferes with its interaction with CPAP. Interacts with gamma-tubulin. Part of the HDP-RNP complex composed of at least HEXIM1, PRKDC, XRCC5, XRCC6, paraspeckle proteins (SFPQ, NONO, PSPC1, RBM14, and MATR3) and NEAT1 RNA. Interacts with RBPMS; the interaction allows cooperative assembly of RNA-bound stable cell-specific alternative splicing regulatory complexes. In terms of tissue distribution, expressed in all tissues tested, including brain, heart, skeletal muscle, colon, thymus, spleen, kidney, liver, small intestine, placenta, lung and peripheral blood lymphocytes.

The protein resides in the nucleus. Its subcellular location is the nucleolus. The protein localises to the cytoplasm. Functionally, isoform 1 may function as a nuclear receptor coactivator, enhancing transcription through other coactivators such as NCOA6 and CITED1. Isoform 2, functions as a transcriptional repressor, modulating transcriptional activities of coactivators including isoform 1, NCOA6 and CITED1. Regulates centriole biogenesis by suppressing the formation of aberrant centriolar protein complexes in the cytoplasm and thus preserving mitotic spindle integrity. Prevents the formation of the STIL-CPAP complex (which can induce the formation of aberrant centriolar protein complexes) by interfering with the interaction of STIL with CPAP. Plays a role in the regulation of DNA virus-mediated innate immune response by assembling into the HDP-RNP complex, a complex that serves as a platform for IRF3 phosphorylation and subsequent innate immune response activation through the cGAS-STING pathway. Also involved in the regulation of pre-mRNA alternative splicing. The polypeptide is RNA-binding protein 14 (RBM14) (Homo sapiens (Human)).